The sequence spans 340 residues: Probable dual-specificity RNA methyltransferase RlmN (340 aa).

Glu-90 functions as the Proton acceptor in the catalytic mechanism. Residues 97–325 (QVSRKTACLS…PVTRRYQRGN (229 aa)) enclose the Radical SAM core domain. The cysteines at positions 104 and 331 are disulfide-linked. Positions 111, 115, and 118 each coordinate [4Fe-4S] cluster. Residues 157 to 158 (GE), Ser-189, 212 to 214 (SLT), and Asn-288 each bind S-adenosyl-L-methionine. Catalysis depends on Cys-331, which acts as the S-methylcysteine intermediate.

The protein belongs to the radical SAM superfamily. RlmN family. It depends on [4Fe-4S] cluster as a cofactor.

It is found in the cytoplasm. It carries out the reaction adenosine(2503) in 23S rRNA + 2 reduced [2Fe-2S]-[ferredoxin] + 2 S-adenosyl-L-methionine = 2-methyladenosine(2503) in 23S rRNA + 5'-deoxyadenosine + L-methionine + 2 oxidized [2Fe-2S]-[ferredoxin] + S-adenosyl-L-homocysteine. It catalyses the reaction adenosine(37) in tRNA + 2 reduced [2Fe-2S]-[ferredoxin] + 2 S-adenosyl-L-methionine = 2-methyladenosine(37) in tRNA + 5'-deoxyadenosine + L-methionine + 2 oxidized [2Fe-2S]-[ferredoxin] + S-adenosyl-L-homocysteine. In terms of biological role, specifically methylates position 2 of adenine 2503 in 23S rRNA and position 2 of adenine 37 in tRNAs. This chain is Probable dual-specificity RNA methyltransferase RlmN, found in Treponema pallidum (strain Nichols).